Reading from the N-terminus, the 986-residue chain is MPPGRWHAARSAQVSREQGCLRMVKEEEEDGYISMQTARPQTLNRPGQELFRQLFRQLRYHESSGPLETLSRLQELCRWWMRPDVLSKAQMLELLVLEQFLSILPGELRTWVQLHCPESGAEVVALLEELQRDLDGTPLKDPCLTQNPDVHWIGTSALQPAQIWSPASHLKNSSALEDHLETSHGIGICDVLAEQTDSPAVSVPDYFQLEEGIEYQEALTFQDVEVTFSQEEWGCLNSAQRNLYRDVILENYGNVVSVVGSSPKPALISWLEARKPWGVNICTVQLKRDADAAPEGGKLQIKPNKFILKQKPSEYIEACVKTSVSPETSVSEETGLKESFKQKSRLQTSCGDSIQMKEMKEGADISQRTGRESEVLRNNDILELKHVKCVSVSRKRLSFKHGYDRNFRKSSHHYNNKYGEGLRGTGEGFGVYQNTGLKENGKDRYGETSRKSWHAHPEHRQPSYSEEGLFQCRVCGKAFKWRSNRIRHEKIHTGVKPYQCSLCEKAFQRLSSYRLHQKTHSKQKRGSSKYKNALTCSLDVSHHLTDRDERKHLHCNQCGKNFSCKSYAIEHQRIHTQEKPYKCTRCRKTFRWKSNFSRHMKLHHKEVYKQEKRQEDFKQSYRQSQVISTVEKTFPCQNCGKTFTQKKSLIEHQRIHTGEKPYQCSGCGETFTYRSSYIIHMKRTQHAIKIKPEHGCLTFSQGAVFPIPRGSHNTEGSNKCKYCGKAFHNRSFLLIHERVHTREKPYQCRECEKAFRWSSNLYRHQRKHFLHKRYKYRESKETSNLQSKILIDQKPFWCQECGKTFTRKRSLLDHKGIHSGERRFKCNLCEKSFDRNYRLVNHQRIHTTEQPQWRDKDFVGIHARSVDQRKHSNTLQSEYGLHSDKPGLSYCQDVRLNIQELSGKLRKECDNPSDESSKSIAFQNVPTKKKACHKCSTCGKTFKKHSHLISHKRCHTKERPFKCIVCGKTFRWSSNLTRHMKNHVRN.

The SCAN box domain occupies 52–134 (RQLFRQLRYH…ALLEELQRDL (83 aa)). One can recognise a KRAB domain in the interval 219–289 (LTFQDVEVTF…NICTVQLKRD (71 aa)). Glycyl lysine isopeptide (Lys-Gly) (interchain with G-Cter in SUMO2) cross-links involve residues K302, K360, and K385. Positions 433–460 (QNTGLKENGKDRYGETSRKSWHAHPEHR) are disordered. A compositionally biased stretch (basic and acidic residues) spans 439-460 (ENGKDRYGETSRKSWHAHPEHR). C2H2-type zinc fingers lie at residues 470 to 492 (FQCRVCGKAFKWRSNRIRHEKIH) and 498 to 520 (YQCSLCEKAFQRLSSYRLHQKTH). K524 participates in a covalent cross-link: Glycyl lysine isopeptide (Lys-Gly) (interchain with G-Cter in SUMO2). 2 consecutive C2H2-type zinc fingers follow at residues 553–575 (LHCNQCGKNFSCKSYAIEHQRIH) and 581–604 (YKCTRCRKTFRWKSNFSRHMKLHH). K609 is covalently cross-linked (Glycyl lysine isopeptide (Lys-Gly) (interchain with G-Cter in SUMO2)). 2 consecutive C2H2-type zinc fingers follow at residues 634–656 (FPCQNCGKTFTQKKSLIEHQRIH) and 662–686 (YQCSGCGETFTYRSSYIIHMKRTQH). A Glycyl lysine isopeptide (Lys-Gly) (interchain with G-Cter in SUMO2) cross-link involves residue K691. 4 consecutive C2H2-type zinc fingers follow at residues 718–740 (NKCKYCGKAFHNRSFLLIHERVH), 746–768 (YQCRECEKAFRWSSNLYRHQRKH), 796–818 (FWCQECGKTFTRKRSLLDHKGIH), and 824–846 (FKCNLCEKSFDRNYRLVNHQRIH). A Glycyl lysine isopeptide (Lys-Gly) (interchain with G-Cter in SUMO2) cross-link involves residue K929. 2 consecutive C2H2-type zinc fingers follow at residues 933-955 (HKCSTCGKTFKKHSHLISHKRCH) and 961-983 (FKCIVCGKTFRWSSNLTRHMKNH).

This sequence belongs to the krueppel C2H2-type zinc-finger protein family.

Its subcellular location is the nucleus. Transcription regulator required to maintain maternal and paternal gene imprinting, a process by which gene expression is restricted in a parent of origin-specific manner by epigenetic modification of genomic DNA and chromatin, including DNA methylation. Acts by controlling DNA methylation during the earliest multicellular stages of development at multiple imprinting control regions (ICRs). Acts together with ZFP57, but ZFP57 plays the predominant role in imprinting maintenance. In contrast, ZNF445 seems to be the major factor in human early embryonic imprinting maintenance. This is Zinc finger protein 445 (Znf445) from Mus musculus (Mouse).